Consider the following 196-residue polypeptide: Recombination protein RecR (196 aa).

The C4-type zinc-finger motif lies at 57 to 72 (CERCHTFTQADICATC). A Toprim domain is found at 80 to 175 (SKLCVVETPA…RLTRLARGVP (96 aa)).

The protein belongs to the RecR family.

Its function is as follows. May play a role in DNA repair. It seems to be involved in an RecBC-independent recombinational process of DNA repair. It may act with RecF and RecO. The protein is Recombination protein RecR of Albidiferax ferrireducens (strain ATCC BAA-621 / DSM 15236 / T118) (Rhodoferax ferrireducens).